The chain runs to 485 residues: GlcNAc-binding protein A (485 aa).

An N-terminal signal peptide occupies residues 1–23 (MKKQPKMTAIALILSGISGLAYG). Residues 24 to 201 (HGYVSAVENG…SFYNVIDVKF (178 aa)) form the Chitin-binding type-4 domain. Residues 437–478 (AGTKVLASDGAIYQCKPWPYSGYCQQWTSNATQYQPGTGSHW) enclose the Chitin-binding type-3 domain.

It belongs to the GbpA family.

Its subcellular location is the secreted. Functionally, probably interacts with GlcNAc residues. May promote attachment to both epithelial cell surfaces and chitin. The sequence is that of GlcNAc-binding protein A from Vibrio cholerae serotype O1 (strain ATCC 39541 / Classical Ogawa 395 / O395).